The chain runs to 459 residues: tRNA modification GTPase MnmE (459 aa).

(6S)-5-formyl-5,6,7,8-tetrahydrofolate-binding residues include Arg29, Glu91, and Arg130. The 157-residue stretch at 225-381 folds into the TrmE-type G domain; that stretch reads GVKVAIVGRP…LEEALEQLVT (157 aa). A K(+)-binding site is contributed by Asn235. GTP is bound by residues 235–240, 254–260, and 279–282; these read NVGKSS, TDLPGTT, and DTAG. Ser239 is a binding site for Mg(2+). K(+) contacts are provided by Thr254, Leu256, and Thr259. Residue Thr260 coordinates Mg(2+). Residue Lys459 coordinates (6S)-5-formyl-5,6,7,8-tetrahydrofolate.

It belongs to the TRAFAC class TrmE-Era-EngA-EngB-Septin-like GTPase superfamily. TrmE GTPase family. In terms of assembly, homodimer. Heterotetramer of two MnmE and two MnmG subunits. It depends on K(+) as a cofactor.

The protein resides in the cytoplasm. Its function is as follows. Exhibits a very high intrinsic GTPase hydrolysis rate. Involved in the addition of a carboxymethylaminomethyl (cmnm) group at the wobble position (U34) of certain tRNAs, forming tRNA-cmnm(5)s(2)U34. In Synechococcus sp. (strain JA-3-3Ab) (Cyanobacteria bacterium Yellowstone A-Prime), this protein is tRNA modification GTPase MnmE.